The chain runs to 318 residues: Acetyl-coenzyme A carboxylase carboxyl transferase subunit alpha (318 aa).

The region spanning 36-293 (EIDRLKEKST…KTRLSEQLDQ (258 aa)) is the CoA carboxyltransferase C-terminal domain.

It belongs to the AccA family. Acetyl-CoA carboxylase is a heterohexamer composed of biotin carboxyl carrier protein (AccB), biotin carboxylase (AccC) and two subunits each of ACCase subunit alpha (AccA) and ACCase subunit beta (AccD).

The protein localises to the cytoplasm. It carries out the reaction N(6)-carboxybiotinyl-L-lysyl-[protein] + acetyl-CoA = N(6)-biotinyl-L-lysyl-[protein] + malonyl-CoA. It participates in lipid metabolism; malonyl-CoA biosynthesis; malonyl-CoA from acetyl-CoA: step 1/1. Functionally, component of the acetyl coenzyme A carboxylase (ACC) complex. First, biotin carboxylase catalyzes the carboxylation of biotin on its carrier protein (BCCP) and then the CO(2) group is transferred by the carboxyltransferase to acetyl-CoA to form malonyl-CoA. This chain is Acetyl-coenzyme A carboxylase carboxyl transferase subunit alpha, found in Teredinibacter turnerae (strain ATCC 39867 / T7901).